Consider the following 460-residue polypeptide: Ammonium transporter Rh type B (460 aa).

Topologically, residues Met1–Ile10 are cytoplasmic. The chain crosses the membrane as a helical span at residues Lys11–Val31. At Arg32–Tyr62 the chain is on the extracellular side. Asn48 carries an N-linked (GlcNAc...) asparagine glycan. Residues Pro63 to Leu83 traverse the membrane as a helical segment. Residues Lys84–Gly87 are Cytoplasmic-facing. The chain crosses the membrane as a helical span at residues Phe88–Ile108. Over Gln109–Glu125 the chain is Extracellular. A helical membrane pass occupies residues Ser126–Gly146. Residues Lys147–Pro150 lie on the Cytoplasmic side of the membrane. A helical membrane pass occupies residues Val151–Ile171. Over Leu172–Asp179 the chain is Extracellular. A helical membrane pass occupies residues Ala180–Tyr202. Over Arg203–Asp220 the chain is Cytoplasmic. The chain crosses the membrane as a helical span at residues Leu221–Ile241. At Thr242–Val252 the chain is on the extracellular side. Residues Met253–Leu273 traverse the membrane as a helical segment. Over Asn274–His283 the chain is Cytoplasmic. A helical membrane pass occupies residues Ile284 to Thr304. Residue Pro305 is a topological domain, extracellular. Residues Phe306 to Leu326 traverse the membrane as a helical segment. Residues Thr327 to Gly347 lie on the Cytoplasmic side of the membrane. The helical transmembrane segment at Met348–Ile368 threads the bilayer. The Extracellular segment spans residues Tyr369–Gln394. The helical transmembrane segment at Phe395–Ile415 threads the bilayer. Residues Leu416–Ala460 are Cytoplasmic-facing.

The protein belongs to the ammonium transporter (TC 2.A.49) family. Rh subfamily.

Its subcellular location is the basolateral cell membrane. The protein resides in the cytoplasmic vesicle membrane. Functionally, functions as a specific ammonium transporter. In Xenopus tropicalis (Western clawed frog), this protein is Ammonium transporter Rh type B (rhbg).